The primary structure comprises 210 residues: Protein GET1 (210 aa).

The Lumenal segment spans residues 1-4 (MPSL). A helical transmembrane segment spans residues 5–24 (LIIVLIIHVVTYLINTIGAN). Residues 25 to 110 (TIDSLLWLLY…SFDLAVKSVR (86 aa)) are Cytoplasmic-facing. Residues 39–95 (NQTSQTADEQRRLKREVMQLKREMNATSSQDEFAKWAKLRRRHDKTMEEYEAKNKAL) adopt a coiled-coil conformation. A helical transmembrane segment spans residues 111-131 (FFSTTGLKLFLQFWFSKTPIF). Topologically, residues 132-155 (ELPRGWIPWQVEWVLSFPRAPLGT) are lumenal. The helical transmembrane segment at 156–172 (VSIQIWGGVCATVVSLA) threads the bilayer. Over 173 to 210 (GDAIGVVNVYLTSKAPKQKEPATSGENSARPMAIKKEL) the chain is Cytoplasmic. Residues 189-210 (KQKEPATSGENSARPMAIKKEL) are disordered.

This sequence belongs to the WRB/GET1 family. Interacts with GET3.

It localises to the endoplasmic reticulum membrane. In terms of biological role, required for the post-translational delivery of tail-anchored (TA) proteins to the endoplasmic reticulum. Acts as a membrane receptor for soluble GET3, which recognizes and selectively binds the transmembrane domain of TA proteins in the cytosol. The protein is Protein GET1 of Coccidioides posadasii (strain C735) (Valley fever fungus).